A 361-amino-acid polypeptide reads, in one-letter code: Replication factor C subunit 3 (361 aa).

Positions M1–P28 are enriched in low complexity. Residues M1 to P39 form a disordered region. Y77–K84 contributes to the ATP binding site.

This sequence belongs to the activator 1 small subunits family. In terms of assembly, heterotetramer of subunits RFC2, RFC3, RFC4 and RFC5 that can form a complex with RFC1. As to expression, expressed in roots, leaves, shoot apical meristem (SAM), flag leaves and panicles.

Its subcellular location is the nucleus. May be involved in DNA replication and thus regulate cell proliferation. The chain is Replication factor C subunit 3 (RFC3) from Oryza sativa subsp. japonica (Rice).